The chain runs to 531 residues: Peptide chain release factor 3 (531 aa).

The region spanning 10 to 278 is the tr-type G domain; sequence RRRRTFAIIS…SLIDWAPAPK (269 aa). Residues 19 to 26, 87 to 91, and 141 to 144 each bind GTP; these read SHPDAGKT, DTPGH, and NKYD.

It belongs to the TRAFAC class translation factor GTPase superfamily. Classic translation factor GTPase family. PrfC subfamily.

The protein resides in the cytoplasm. Its function is as follows. Increases the formation of ribosomal termination complexes and stimulates activities of RF-1 and RF-2. It binds guanine nucleotides and has strong preference for UGA stop codons. It may interact directly with the ribosome. The stimulation of RF-1 and RF-2 is significantly reduced by GTP and GDP, but not by GMP. The protein is Peptide chain release factor 3 of Neisseria meningitidis serogroup C / serotype 2a (strain ATCC 700532 / DSM 15464 / FAM18).